We begin with the raw amino-acid sequence, 277 residues long: MDTKRMLQNSVLALTDDTLISIGTVTNAAREVANDGVDQCDPQIITQASSLSKLPLEPSSVDIVIPIFRSIEFPGDLLVKEMFRVLKPGGTILIYSSQQSVIGETDKAISGLQRKLLLGGFLEAEALQPKPVGLSNVVCSFGVKAKKPSWNIGSSFALKKSIKSPVKVQNDDYSDLIDEDSLLTEEDLKKPQLPPVGDCEVGSTRKACKNCTCGRAEEEEKVKLGPTMDQLSNPQSACGSCGLGDAFRCGTCPYKGLPPFKLGEKVSLSENFLVADI.

The N-terminal SAM-like domain stretch occupies residues 1–160; the sequence is MDTKRMLQNS…NIGSSFALKK (160 aa). The tract at residues 161–188 is linker; it reads SIKSPVKVQNDDYSDLIDEDSLLTEEDL. Residues cysteine 199, cysteine 208, cysteine 211, and cysteine 213 each contribute to the [2Fe-2S] cluster site. A fe-S binding site A region spans residues 199–213; the sequence is CEVGSTRKACKNCTC. Residues cysteine 238, cysteine 241, cysteine 249, and cysteine 252 each contribute to the [4Fe-4S] cluster site. 2 short sequence motifs (cx2C motif) span residues 238-241 and 249-252; these read CGSC and CGTC. The tract at residues 238–252 is fe-S binding site B; sequence CGSCGLGDAFRCGTC.

It belongs to the anamorsin family. Monomer. The cofactor is [2Fe-2S] cluster. It depends on [4Fe-4S] cluster as a cofactor.

It localises to the cytoplasm. The protein localises to the mitochondrion intermembrane space. Functionally, component of the cytosolic iron-sulfur (Fe-S) protein assembly (CIA) machinery. Required for the maturation of extramitochondrial Fe-S proteins. Part of an electron transfer chain functioning in an early step of cytosolic Fe-S biogenesis, facilitating the de novo assembly of a [4Fe-4S] cluster on the cytosolic Fe-S scaffold complex. Electrons are transferred from NADPH via a FAD- and FMN-containing diflavin oxidoreductase. Together with the diflavin oxidoreductase, also required for the assembly of the diferric tyrosyl radical cofactor of ribonucleotide reductase (RNR), probably by providing electrons for reduction during radical cofactor maturation in the catalytic small subunit. This chain is Anamorsin homolog, found in Populus trichocarpa (Western balsam poplar).